The chain runs to 316 residues: tRNA dimethylallyltransferase (316 aa).

17–24 (GPTASGKT) lines the ATP pocket. 19 to 24 (TASGKT) serves as a coordination point for substrate. 4 interaction with substrate tRNA regions span residues 42-45 (DSAL), 166-170 (QRLSR), 247-252 (RCVGYR), and 280-287 (KRQITWLR).

Belongs to the IPP transferase family. Monomer. Requires Mg(2+) as cofactor.

The catalysed reaction is adenosine(37) in tRNA + dimethylallyl diphosphate = N(6)-dimethylallyladenosine(37) in tRNA + diphosphate. In terms of biological role, catalyzes the transfer of a dimethylallyl group onto the adenine at position 37 in tRNAs that read codons beginning with uridine, leading to the formation of N6-(dimethylallyl)adenosine (i(6)A). This Shigella boydii serotype 18 (strain CDC 3083-94 / BS512) protein is tRNA dimethylallyltransferase.